The chain runs to 330 residues: Phospholipase C (330 aa).

Residues 1 to 34 form the signal peptide; the sequence is MVKKTKSNSLKKVATLALANLLLVGALTDNSAKA. A disulfide bridge connects residues C155 and C191.

This sequence belongs to the neutral sphingomyelinase family. As to quaternary structure, monomer.

It is found in the secreted. The enzyme catalyses a 1,2-diacyl-sn-glycero-3-phosphocholine + H2O = phosphocholine + a 1,2-diacyl-sn-glycerol + H(+). Its function is as follows. Bacterial hemolysins are exotoxins that attack blood cell membranes and cause cell rupture. Beta-hemolysin is a phospholipase C with specific activity toward sphingomyelins. Has a high specificity for sphingomyelin, hydrolyzes lysophosphatidylcholine at a much lower rate, but has no activity towards phosphatidylcholine, phosphatidylethanolamine, or phosphatidylserine. The protein is Phospholipase C (hlb) of Staphylococcus aureus (strain NCTC 8325 / PS 47).